The following is a 533-amino-acid chain: Thromboxane-A synthase (533 aa).

The Cytoplasmic segment spans residues 1–10 (MEALGFLKLE). The chain crosses the membrane as a helical span at residues 11 to 31 (VNGPMVTVALSVALLALLKWY). At 32–75 (STSAFSRLEKLGLRHPKPSPFIGNLMFFRQGFWESQMELRKLYG) the chain is on the lumenal side. The helical transmembrane segment at 76–96 (PLCGYYLGRRMFIVISEPDMI) threads the bilayer. Topologically, residues 97 to 223 (KQVLVENFSN…KRFFEFCIPR (127 aa)) are cytoplasmic. A helical transmembrane segment spans residues 224 to 244 (PILVLLLSFPSIMVPLARILP). Residues 245–335 (NKNRDELNGF…LTVDEIVGQA (91 aa)) lie on the Lumenal side of the membrane. A helical transmembrane segment spans residues 336–356 (FIFLIAGYEIVTNTLSFATYL). Residues 357-533 (LATNPDCQEK…NGVYIKIVSR (177 aa)) lie on the Cytoplasmic side of the membrane. A heme-binding site is contributed by cysteine 479.

This sequence belongs to the cytochrome P450 family. As to quaternary structure, monomer. The cofactor is heme.

It is found in the endoplasmic reticulum membrane. The catalysed reaction is prostaglandin H2 = thromboxane A2. It catalyses the reaction prostaglandin H2 = (12S)-hydroxy-(5Z,8E,10E)-heptadecatrienoate + malonaldehyde. The enzyme catalyses a hydroperoxyeicosatetraenoate = an oxoeicosatetraenoate + H2O. It carries out the reaction (15S)-hydroperoxy-(5Z,8Z,11Z,13E)-eicosatetraenoate = 15-oxo-(5Z,8Z,11Z,13E)-eicosatetraenoate + H2O. The catalysed reaction is (15S)-hydroperoxy-(5Z,8Z,11Z,13E)-eicosatetraenoate + AH2 = (15S)-hydroxy-(5Z,8Z,11Z,13E)-eicosatetraenoate + A + H2O. Its function is as follows. Catalyzes the conversion of prostaglandin H2 (PGH2) to thromboxane A2 (TXA2), a potent inducer of blood vessel constriction and platelet aggregation. Also cleaves PGH2 to 12-hydroxy-heptadecatrienoicacid (12-HHT) and malondialdehyde, which is known to act as a mediator of DNA damage. 12-HHT and malondialdehyde are formed stoichiometrically in the same amounts as TXA2. Additionally, displays dehydratase activity, toward (15S)-hydroperoxy-(5Z,8Z,11Z,13E)-eicosatetraenoate (15(S)-HPETE) producing 15-KETE and 15-HETE. This chain is Thromboxane-A synthase (TBXAS1), found in Macaca fascicularis (Crab-eating macaque).